The primary structure comprises 439 residues: Ribosomal protein uS12 methylthiotransferase RimO (439 aa).

The 113-residue stretch at lysine 7–asparagine 119 folds into the MTTase N-terminal domain. Positions 16, 50, 82, 151, 155, and 158 each coordinate [4Fe-4S] cluster. The region spanning threonine 137–lysine 368 is the Radical SAM core domain.

Belongs to the methylthiotransferase family. RimO subfamily. [4Fe-4S] cluster serves as cofactor.

It is found in the cytoplasm. It catalyses the reaction L-aspartate(89)-[ribosomal protein uS12]-hydrogen + (sulfur carrier)-SH + AH2 + 2 S-adenosyl-L-methionine = 3-methylsulfanyl-L-aspartate(89)-[ribosomal protein uS12]-hydrogen + (sulfur carrier)-H + 5'-deoxyadenosine + L-methionine + A + S-adenosyl-L-homocysteine + 2 H(+). Functionally, catalyzes the methylthiolation of an aspartic acid residue of ribosomal protein uS12. The sequence is that of Ribosomal protein uS12 methylthiotransferase RimO from Helicobacter pylori (strain P12).